The primary structure comprises 463 residues: Sodium-coupled neutral amino acid transporter 7 (463 aa).

A Phosphoserine modification is found at Ser-28. 11 helical membrane-spanning segments follow: residues 56–76 (AVFIVVNACLGAGLLNFPAAF), 82–102 (VAAGIALQMGMLVFIISGLVI), 130–150 (LCEIAIAVYTFGTCIAFLIII), 179–199 (FTISLTAFLFILPLSIPKEIG), 206–226 (SLSVVGTWYVTAIVIIKYIWP), 240–260 (ASWMAVFNAMPTICFGFQCHV), 283–303 (AAMVIALAVYMGTGICGFLTF), 320–340 (VAVAVARAFIILSVLTSYPIL), 372–392 (VLQTLVWFLLTLLLALFIPDI), 396–416 (ISVIGGLAACFIFIFPGLCLI), and 429–449 (ASWWALVSYGVLLVTLGAFIF).

It belongs to the amino acid/polyamine transporter 2 family. In terms of assembly, interacts with the mTORC1 complex; this interaction mediates the recruitment of mTORC1 to the lysosome and its subsequent activation.

It localises to the lysosome membrane. The protein localises to the cell projection. Its subcellular location is the axon. The enzyme catalyses L-asparagine(in) + Na(+)(in) = L-asparagine(out) + Na(+)(out). The catalysed reaction is L-glutamine(in) + Na(+)(in) = L-glutamine(out) + Na(+)(out). Symporter that selectively cotransports sodium ions and amino acids, such as L-glutamine and L-asparagine from the lysosome into the cytoplasm and may participates in mTORC1 activation. The transport activity requires an acidic lysosomal lumen. This is Sodium-coupled neutral amino acid transporter 7 from Rattus norvegicus (Rat).